The chain runs to 241 residues: Uridylate kinase (241 aa).

Residues 15–18, glycine 58, and arginine 62 each bind ATP; that span reads KLSG. UMP contacts are provided by residues aspartate 77 and 138–145; that span reads TGNPYFTT. ATP-binding residues include threonine 165, tyrosine 171, and aspartate 174.

It belongs to the UMP kinase family. In terms of assembly, homohexamer.

The protein resides in the cytoplasm. The catalysed reaction is UMP + ATP = UDP + ADP. Its pathway is pyrimidine metabolism; CTP biosynthesis via de novo pathway; UDP from UMP (UMPK route): step 1/1. With respect to regulation, inhibited by UTP. In terms of biological role, catalyzes the reversible phosphorylation of UMP to UDP. The chain is Uridylate kinase from Desulfotalea psychrophila (strain LSv54 / DSM 12343).